The following is a 566-amino-acid chain: KsdD-like steroid dehydrogenase Rv0785 (566 aa).

Residue 23–54 (DAIVVGAGLAGLVAACELADRGLRVLILDQEN) participates in FAD binding.

The protein belongs to the FAD-dependent oxidoreductase 2 family. FAD serves as cofactor.

It functions in the pathway lipid metabolism; steroid biosynthesis. Able to catalyze the elimination of the C-1 and C-2 hydrogen atoms of the A-ring from the polycyclic ring structure of 3-ketosteroids. This is KsdD-like steroid dehydrogenase Rv0785 from Mycobacterium tuberculosis (strain ATCC 25618 / H37Rv).